The sequence spans 1979 residues: Repetitive organellar protein (1979 aa).

Basic residues predominate over residues 1-12 (MVFTFKNKKKKK). Disordered stretches follow at residues 1-42 (MVFT…DSWY) and 54-116 (TKYK…NNYS). 2 stretches are compositionally biased toward basic and acidic residues: residues 13–24 (EASSDKVSKESF) and 31–42 (NNEKREKSDSWY). Residues 68 to 114 (EDIINNNNNNNNDNNNDNNNDNNNDNNNDNNNDNNNENNNDNNNFNN) are compositionally biased toward low complexity. Coiled coils occupy residues 127–366 (DNEL…LKDE), 412–666 (LKVY…EMEL), 693–876 (LKES…KKKQ), 992–1094 (KKKH…YKTI), 1126–1307 (VDKI…MNIK), and 1398–1467 (IANY…LTSQ).

Its subcellular location is the host cell membrane. The sequence is that of Repetitive organellar protein from Plasmodium falciparum (isolate 3D7).